The primary structure comprises 193 residues: Ancillary SecYEG translocon subunit (193 aa).

Over 1-8 (MLNISKKN) the chain is Cytoplasmic. Residues 9–29 (IIFFILFFLIISLILFNWKYF) traverse the membrane as a helical segment. Residues 30 to 193 (SLVNKENLES…MKLNELKEQN (164 aa)) are Periplasmic-facing.

Belongs to the YfgM family. Interacts with the SecYEG translocon. Forms a complex with PpiD.

The protein localises to the cell inner membrane. In terms of biological role, may mediate protein transfer from the SecYEG translocon to the periplasmic chaperone network via its periplasmic C-terminal region. The polypeptide is Ancillary SecYEG translocon subunit (Buchnera aphidicola subsp. Acyrthosiphon pisum (strain APS) (Acyrthosiphon pisum symbiotic bacterium)).